We begin with the raw amino-acid sequence, 101 residues long: Large ribosomal subunit protein bL28 (101 aa).

The protein belongs to the bacterial ribosomal protein bL28 family.

This Methylorubrum populi (strain ATCC BAA-705 / NCIMB 13946 / BJ001) (Methylobacterium populi) protein is Large ribosomal subunit protein bL28.